A 343-amino-acid polypeptide reads, in one-letter code: Putative outer membrane protein y4fJ (343 aa).

The first 17 residues, 1-17 (MRMNFSTVLLGSSVALA), serve as a signal peptide directing secretion.

It belongs to the alphaproteobacteria porin family.

It is found in the cell outer membrane. Functionally, may act as an outer membrane pore. This chain is Putative outer membrane protein y4fJ, found in Sinorhizobium fredii (strain NBRC 101917 / NGR234).